We begin with the raw amino-acid sequence, 441 residues long: MQQAAAPKISFVSLGCPKALVDSERIITRLRAEGYELARQHDGADLVIVNTCGFLDSAKQESLAAIGEAMAANGKVIVTGCMGAEPEQIEAAYPGVLSITGPQQYESVLEAVHRAKPALHNPHLDLVPEQGIRLTPRHYAYLKISEGCNNRCSFCIIPKLRGDLVSRSADDVLREAEKLVAAGVKELLVISQDTSAYGVDLKYAESPWKDRTVRAKFIDLARELGELGAWVRLHYVYPYPHVDEVIGLMAEGKVLPYLDIPFQHASPDVLKLMKRPAAQDKTLDRIKRWRADCPDLALRSTFIVGFPGETERDFEFLLDWLDEAEIDRLGAFKYEPVAGAPSNALPDQISAEVKQERWNRLMARQQVISARRLKRKVGTRQQIIIDEVGPTVAKGRSKADAPEIDGSVYLSSRRPLRVGEIVTAKIDRADAYDLHGTVAGF.

In terms of domain architecture, MTTase N-terminal spans 7 to 117; the sequence is PKISFVSLGC…VLEAVHRAKP (111 aa). Positions 16, 52, 81, 148, 152, and 155 each coordinate [4Fe-4S] cluster. Positions 134–371 constitute a Radical SAM core domain; it reads LTPRHYAYLK…MARQQVISAR (238 aa). The TRAM domain maps to 374–440; it reads KRKVGTRQQI…AYDLHGTVAG (67 aa).

It belongs to the methylthiotransferase family. RimO subfamily. The cofactor is [4Fe-4S] cluster.

The protein resides in the cytoplasm. It carries out the reaction L-aspartate(89)-[ribosomal protein uS12]-hydrogen + (sulfur carrier)-SH + AH2 + 2 S-adenosyl-L-methionine = 3-methylsulfanyl-L-aspartate(89)-[ribosomal protein uS12]-hydrogen + (sulfur carrier)-H + 5'-deoxyadenosine + L-methionine + A + S-adenosyl-L-homocysteine + 2 H(+). Its function is as follows. Catalyzes the methylthiolation of an aspartic acid residue of ribosomal protein uS12. This is Ribosomal protein uS12 methylthiotransferase RimO from Rhodopseudomonas palustris (strain BisB5).